A 71-amino-acid chain; its full sequence is Putative membrane protein insertion efficiency factor (71 aa).

This sequence belongs to the UPF0161 family.

The protein localises to the cell membrane. Its function is as follows. Could be involved in insertion of integral membrane proteins into the membrane. The polypeptide is Putative membrane protein insertion efficiency factor (Desulforudis audaxviator (strain MP104C)).